Consider the following 111-residue polypeptide: WAP four-disulfide core domain protein 12 (111 aa).

Positions 1–23 are cleaved as a signal peptide; sequence MGSSSFLVLTVSLALVTLVAAEG. In terms of domain architecture, WAP spans 27–74; that stretch reads GIEKAGVCPADNVRCFKSDPPQCHTDQDCLGARKCCYLHCGFKCVIPV. 4 cysteine pairs are disulfide-bonded: cysteine 34–cysteine 62, cysteine 41–cysteine 66, cysteine 49–cysteine 61, and cysteine 55–cysteine 70. The segment at 80–111 is disordered; the sequence is GGNKDEDVSGPCPEPGWEAKSPGSSSTGCPQK. The segment covering 101-111 has biased composition (polar residues); the sequence is PGSSSTGCPQK.

The protein localises to the secreted. Antibacterial protein. Putative acid-stable proteinase inhibitor. This is WAP four-disulfide core domain protein 12 (WFDC12) from Papio anubis (Olive baboon).